The sequence spans 458 residues: Dynein regulatory complex protein 10 (458 aa).

Coiled-coil stretches lie at residues 96-137 (GQTL…HKVN), 209-255 (IQDI…KNHL), and 285-379 (QVRL…IRAE). Residues 397 to 426 (MVRAATLIQAVWKGYLVRSILRSKKKKRGK) form the IQ domain. Residues 419–458 (SKKKKRGKGKGKDKGKGKEKPKEEKAKEKKPKAKGKGKKK) are disordered. Positions 428-445 (KGKDKGKGKEKPKEEKAK) are enriched in basic and acidic residues. Residues 446-458 (EKKPKAKGKGKKK) are compositionally biased toward basic residues.

It belongs to the DRC10 family. Component of the nexin-dynein regulatory complex (N-DRC). Interacts with CFAP52.

The protein resides in the cytoplasm. The protein localises to the cytoskeleton. Its subcellular location is the flagellum axoneme. In terms of biological role, component of the nexin-dynein regulatory complex (N-DRC), a key regulator of ciliary/flagellar motility which maintains the alignment and integrity of the distal axoneme and regulates microtubule sliding in motile axonemes. In Mus musculus (Mouse), this protein is Dynein regulatory complex protein 10 (Iqcd).